A 150-amino-acid polypeptide reads, in one-letter code: Ribonuclease K6 (150 aa).

Residues 1-23 (MVLCFPLLLLLLVLWGPVCPLHA) form the signal peptide. His-38 acts as the Proton acceptor in catalysis. 4 cysteine pairs are disulfide-bonded: Cys-46–Cys-104, Cys-60–Cys-114, Cys-78–Cys-129, and Cys-85–Cys-92. A glycan (N-linked (GlcNAc...) asparagine) is linked at Asn-55. Substrate contacts are provided by residues 61-65 (KHQNT) and Lys-86. Asn-100 carries N-linked (GlcNAc...) asparagine glycosylation. Residue Arg-105 coordinates substrate. The active-site Proton donor is His-145.

The protein belongs to the pancreatic ribonuclease family. As to quaternary structure, interacts (via N-terminus) with bacterial lipopolysaccharide (LPS).

It is found in the secreted. The protein resides in the lysosome. The protein localises to the cytoplasmic granule. Ribonuclease which shows a preference for the pyrimidines uridine and cytosine. Has potent antibacterial activity against a range of Gram-positive and Gram-negative bacteria, including P.aeruginosa, A.baumanii, M.luteus, S.aureus, E.faecalis, E.faecium, S.saprophyticus and E.coli. Causes loss of bacterial membrane integrity, and also promotes agglutination of Gram-negative bacteria. Probably contributes to urinary tract sterility. Bactericidal activity is independent of RNase activity. In Pongo pygmaeus (Bornean orangutan), this protein is Ribonuclease K6 (RNASE6).